The primary structure comprises 285 residues: Dermonecrotic toxin LiSicTox-alphaIA2aii (285 aa).

Positions 1-5 (DVEER) are excised as a propeptide. The active site involves His-17. Glu-37 and Asp-39 together coordinate Mg(2+). His-53 serves as the catalytic Nucleophile. 2 cysteine pairs are disulfide-bonded: Cys-57/Cys-63 and Cys-59/Cys-202. Asp-97 serves as a coordination point for Mg(2+). N-linked (GlcNAc...) asparagine glycosylation occurs at Asn-262.

It belongs to the arthropod phospholipase D family. Class II subfamily. Class IIa sub-subfamily. Requires Mg(2+) as cofactor. As to expression, expressed by the venom gland.

The protein localises to the secreted. It carries out the reaction an N-(acyl)-sphingosylphosphocholine = an N-(acyl)-sphingosyl-1,3-cyclic phosphate + choline. The enzyme catalyses an N-(acyl)-sphingosylphosphoethanolamine = an N-(acyl)-sphingosyl-1,3-cyclic phosphate + ethanolamine. It catalyses the reaction a 1-acyl-sn-glycero-3-phosphocholine = a 1-acyl-sn-glycero-2,3-cyclic phosphate + choline. The catalysed reaction is a 1-acyl-sn-glycero-3-phosphoethanolamine = a 1-acyl-sn-glycero-2,3-cyclic phosphate + ethanolamine. Functionally, dermonecrotic toxins cleave the phosphodiester linkage between the phosphate and headgroup of certain phospholipids (sphingolipid and lysolipid substrates), forming an alcohol (often choline) and a cyclic phosphate. This toxin acts on sphingomyelin (SM) with high activity. It may also act on ceramide phosphoethanolamine (CPE), lysophosphatidylcholine (LPC) and lysophosphatidylethanolamine (LPE), but not on lysophosphatidylserine (LPS), and lysophosphatidylglycerol (LPG). It acts by transphosphatidylation, releasing exclusively cyclic phosphate products as second products. Shows high hemolytic activity. Induces dermonecrosis, vascular permeability, edema, inflammatory response, and platelet aggregation. Also shows cytotoxicity against renal epithelial cells. In addition, also induces hemolysis in a complement-dependent manner and probably also in a complement-independent manner. The hemolysis provoked in a complement-independent manner may be composed of several steps. The toxin may bind to erythrocyte membranes, may hydrolyze membrane phospholipids (SM and LPC) thus generating metabolism products that may cause hemolysis, probably by provoking an increase of calcium inside cells. The calcium influx may be due to the opening of L-type calcium channels, since L-type calcium channel blockers inhibit calcium influx. In vivo, is lethal to mice when intraperitoneally injected. The sequence is that of Dermonecrotic toxin LiSicTox-alphaIA2aii from Loxosceles intermedia (Brown spider).